Reading from the N-terminus, the 416-residue chain is uncharacterized protein (416 aa).

9 helical membrane passes run 5–25 (LFLI…ILSL), 84–104 (ISGL…LKHV), 128–148 (AYVP…LFSI), 160–180 (LAFL…YLLW), 192–212 (VLLF…KFGF), 237–257 (PIYF…PVFL), 263–283 (FDKR…FYSL), 288–308 (LHHY…FYLT), and 312–332 (IKYA…GVYI).

Belongs to the glycosyltransferase 83 family.

The protein localises to the cell membrane. This is an uncharacterized protein from Aquifex aeolicus (strain VF5).